Here is a 215-residue protein sequence, read N- to C-terminus: E3 ubiquitin-protein ligase NleG (215 aa).

The segment at 136 to 189 (CPITLCIPETGVFVRNAKNSEICSLYDHNALTELIRRNAPHPLSREPFVPEMIV) is RING/U-box domain. Positions 213–215 (TRI) match the PDZ-binding motif motif.

This sequence belongs to the NleG E3 ligase family. As to quaternary structure, interacts with host GOPC (human protein). In terms of processing, two sizes of protein are detected upon expression in C.rodentium; only the smaller protein is secreted.

It is found in the secreted. The protein localises to the host cytoplasm. The catalysed reaction is S-ubiquitinyl-[E2 ubiquitin-conjugating enzyme]-L-cysteine + [acceptor protein]-L-lysine = [E2 ubiquitin-conjugating enzyme]-L-cysteine + N(6)-ubiquitinyl-[acceptor protein]-L-lysine.. Functionally, effector proteins function to alter host cell physiology and promote bacterial survival in host tissues. This protein is an E3 ubiquitin-protein ligase that probably interferes with the host's ubiquitination pathway and targets host proteins for proteasomal degradation. Can ubiquitinate ubiquitin, giving rise to polyubiquitin chains (in vitro). Does not complement an nleG8 deletion in C.rodentium. This is E3 ubiquitin-protein ligase NleG from Escherichia coli O157:H7.